We begin with the raw amino-acid sequence, 416 residues long: NADH-quinone oxidoreductase subunit D (416 aa).

The protein belongs to the complex I 49 kDa subunit family. NDH-1 is composed of 14 different subunits. Subunits NuoB, C, D, E, F, and G constitute the peripheral sector of the complex.

The protein resides in the cell inner membrane. The enzyme catalyses a quinone + NADH + 5 H(+)(in) = a quinol + NAD(+) + 4 H(+)(out). Functionally, NDH-1 shuttles electrons from NADH, via FMN and iron-sulfur (Fe-S) centers, to quinones in the respiratory chain. The immediate electron acceptor for the enzyme in this species is believed to be ubiquinone. Couples the redox reaction to proton translocation (for every two electrons transferred, four hydrogen ions are translocated across the cytoplasmic membrane), and thus conserves the redox energy in a proton gradient. This Gluconacetobacter diazotrophicus (strain ATCC 49037 / DSM 5601 / CCUG 37298 / CIP 103539 / LMG 7603 / PAl5) protein is NADH-quinone oxidoreductase subunit D.